Consider the following 449-residue polypeptide: Glutamyl-tRNA reductase (449 aa).

Residues 48–51 (TCNR), S99, 104–106 (EDQ), and Q110 contribute to the substrate site. Residue C49 is the Nucleophile of the active site. NADP(+) is bound at residue 179 to 184 (GAGEIG).

It belongs to the glutamyl-tRNA reductase family. In terms of assembly, homodimer.

It catalyses the reaction (S)-4-amino-5-oxopentanoate + tRNA(Glu) + NADP(+) = L-glutamyl-tRNA(Glu) + NADPH + H(+). Its pathway is porphyrin-containing compound metabolism; protoporphyrin-IX biosynthesis; 5-aminolevulinate from L-glutamyl-tRNA(Glu): step 1/2. Functionally, catalyzes the NADPH-dependent reduction of glutamyl-tRNA(Glu) to glutamate 1-semialdehyde (GSA). The polypeptide is Glutamyl-tRNA reductase (Methanosarcina barkeri (strain Fusaro / DSM 804)).